The following is a 284-amino-acid chain: NADH-cytochrome b5 reductase 1 (284 aa).

A helical membrane pass occupies residues 7–27; the sequence is KLVVVIVIVVVPLLFKFIIGP. Residues 38 to 142 form the FAD-binding FR-type domain; it reads NDFQSFPLVE…KGPRGNYHYE (105 aa). Residues 122-137 and 148-180 contribute to the FAD site; these read GELK…GPRG and HLGM…KVSL.

This sequence belongs to the flavoprotein pyridine nucleotide cytochrome reductase family. As to quaternary structure, monomer. Component of the 2-(3-amino-3-carboxypropyl)histidine synthase complex composed of DPH1, DPH2, KTI11/DPH3 and a NADH-dependent reductase, predominantly CBR1. Interacts with KTI11/DPH3. Interacts with STE20. FAD is required as a cofactor.

The protein resides in the mitochondrion outer membrane. The enzyme catalyses 2 Fe(III)-[cytochrome b5] + NADH = 2 Fe(II)-[cytochrome b5] + NAD(+) + H(+). It carries out the reaction 2 Fe(3+)-[Dph3] + NADH = 2 Fe(2+)-[Dph3] + NAD(+) + H(+). It functions in the pathway protein modification; peptidyl-diphthamide biosynthesis. Competitively inhibited by NAD(+). Inhibited by mercurials such as p-chloromercuribenzoate (PCMB) and HgCl(2). Enzymatic activity increases under anaerobic conditions. In terms of biological role, NADH-dependent reductase for KTI11/DPH3 and cytochrome b5. Required for the first step of diphthamide biosynthesis, a post-translational modification of histidine which occurs in elongation factor 2. DPH1 and DPH2 transfer a 3-amino-3-carboxypropyl (ACP) group from S-adenosyl-L-methionine (SAM) to a histidine residue, the reaction is assisted by a reduction system comprising KTI11/DPH3 and a NADH-dependent reductase, predominantly CBR1. By reducing KTI11/DPH3, also involved in the formation of the tRNA wobble base modification mcm5s 2U (5-methoxycarbonylmethyl-2-thiouridine), mediated by the elongator complex. The cytochrome b5/NADH cytochrome b5 reductase electron transfer system supports the catalytic activity of several sterol biosynthetic enzymes. Plays a role in bud morphology. The polypeptide is NADH-cytochrome b5 reductase 1 (CBR1) (Saccharomyces cerevisiae (strain ATCC 204508 / S288c) (Baker's yeast)).